Consider the following 319-residue polypeptide: HTH-type transcriptional regulator YidZ (319 aa).

The region spanning 8-65 (LDLNLLLCLQLLMQERSVTKAAKRMNVTPSAVSKSLAKLRAWFDDPLFVNTPLGLAPT) is the HTH lysR-type domain. Residues 25–44 (VTKAAKRMNVTPSAVSKSLA) constitute a DNA-binding region (H-T-H motif).

This sequence belongs to the LysR transcriptional regulatory family.

Functionally, involved in anaerobic NO protection. The protein is HTH-type transcriptional regulator YidZ of Salmonella heidelberg (strain SL476).